The following is a 543-amino-acid chain: Chaperonin GroEL 2 (543 aa).

Residues 29–32, 86–90, G413, 479–481, and D495 each bind ATP; these read TLGP, DGTTT, and NAA.

This sequence belongs to the chaperonin (HSP60) family. As to quaternary structure, forms a cylinder of 14 subunits composed of two heptameric rings stacked back-to-back. Interacts with the co-chaperonin GroES.

The protein localises to the cytoplasm. It catalyses the reaction ATP + H2O + a folded polypeptide = ADP + phosphate + an unfolded polypeptide.. Its function is as follows. Together with its co-chaperonin GroES, plays an essential role in assisting protein folding. The GroEL-GroES system forms a nano-cage that allows encapsulation of the non-native substrate proteins and provides a physical environment optimized to promote and accelerate protein folding. The sequence is that of Chaperonin GroEL 2 from Prochlorococcus marinus (strain NATL1A).